Consider the following 671-residue polypeptide: tRNA(Met) cytidine acetyltransferase TmcA (671 aa).

Residues glutamine 180, glycine 202 to glutamine 211, and arginine 319 contribute to the ATP site. One can recognise an N-acetyltransferase domain in the interval glutamine 356–leucine 531. Acetyl-CoA contacts are provided by residues isoleucine 461–valine 463, glutamine 468–arginine 474, glutamate 499, and arginine 506.

This sequence belongs to the RNA cytidine acetyltransferase family. TmcA subfamily.

The protein resides in the cytoplasm. The enzyme catalyses cytidine(34) in elongator tRNA(Met) + acetyl-CoA + ATP + H2O = N(4)-acetylcytidine(34) in elongator tRNA(Met) + ADP + phosphate + CoA + H(+). Its function is as follows. Catalyzes the formation of N(4)-acetylcytidine (ac(4)C) at the wobble position of tRNA(Met), by using acetyl-CoA as an acetyl donor and ATP (or GTP). This chain is tRNA(Met) cytidine acetyltransferase TmcA, found in Shigella flexneri serotype 5b (strain 8401).